Reading from the N-terminus, the 1240-residue chain is ABC transporter B family member 15 (1240 aa).

The next 6 membrane-spanning stretches (helical) occupy residues 35 to 55 (MGLG…VLLI), 82 to 102 (VALL…GYCW), 158 to 180 (LPNF…ILLW), 184 to 206 (IVGL…ALIS), 264 to 284 (GITI…SWYG), and 296 to 316 (GTVF…GGGL). Residues 35–324 (MGLGLIGAVG…GLSNLKYFFE (290 aa)) form the ABC transmembrane type-1 1 domain. The 237-residue stretch at 359-595 (VEFKNVKFVY…IDGQYSTLVH (237 aa)) folds into the ABC transporter 1 domain. 394–401 (GGSGSGKS) is a binding site for ATP. N-linked (GlcNAc...) asparagine glycosylation is found at Asn542, Asn605, and Asn622. Residues 617–646 (SKDIRNSSRVSTLSRSSSANSVTGPSTIKN) are disordered. Low complexity predominate over residues 623–639 (SSRVSTLSRSSSANSVT). The N-linked (GlcNAc...) asparagine glycan is linked to Asn646. One can recognise an ABC transmembrane type-1 2 domain in the interval 672-960 (ALYGCISATL…AGSMTTDLAK (289 aa)). The next 2 helical transmembrane spans lie at 681–701 (LFGA…SVYF) and 714–734 (IYAL…ISQH). N-linked (GlcNAc...) asparagine glycosylation is present at Asn769. Transmembrane regions (helical) follow at residues 794–813 (ALVV…GLVI), 817–839 (LALV…RVLL), 895–915 (SWFA…TWAL), and 923–943 (LIQD…ILVS). One can recognise an ABC transporter 2 domain in the interval 995-1233 (VEFLDVDFSY…GPTGIYFSLV (239 aa)). The N-linked (GlcNAc...) asparagine glycan is linked to Asn1015. 1030–1037 (GPSGSGKS) contacts ATP.

This sequence belongs to the ABC transporter superfamily. ABCB family. Multidrug resistance exporter (TC 3.A.1.201) subfamily.

The protein resides in the membrane. The chain is ABC transporter B family member 15 (ABCB15) from Arabidopsis thaliana (Mouse-ear cress).